The chain runs to 192 residues: Thymidylate kinase (192 aa).

Residue 7 to 14 (GIDCVGKS) coordinates ATP.

Belongs to the thymidylate kinase family.

It catalyses the reaction dTMP + ATP = dTDP + ADP. Functionally, phosphorylation of dTMP to form dTDP in both de novo and salvage pathways of dTTP synthesis. The chain is Thymidylate kinase from Campylobacter jejuni subsp. doylei (strain ATCC BAA-1458 / RM4099 / 269.97).